The primary structure comprises 239 residues: Increased recombination centers protein 22-2 (239 aa).

The first 19 residues, methionine 1 to glycine 19, serve as a signal peptide directing secretion. Residues tyrosine 20 to leucine 161 lie on the Lumenal side of the membrane. A helical transmembrane segment spans residues isoleucine 162–isoleucine 182. Residues tryptophan 183–asparagine 239 are Cytoplasmic-facing. Residues alanine 201 to serine 213 are compositionally biased toward low complexity. Positions alanine 201–threonine 222 are disordered.

The protein belongs to the IRC22 family.

It is found in the endoplasmic reticulum membrane. Its function is as follows. Is probably involved in a pathway contributing to genomic integrity. The polypeptide is Increased recombination centers protein 22-2 (IRC22-2) (Candida albicans (strain WO-1) (Yeast)).